The chain runs to 259 residues: Beta-glucanase (259 aa).

Residues 1–31 form the signal peptide; that stretch reads MVKSKYLVFISVFSLLFGVFVVGFSHQGVKA. A GH16 domain is found at 35 to 255; sequence RPMGTAFYES…WVRYTPLQNY (221 aa). The Nucleophile role is filled by glutamate 142. Glutamate 146 acts as the Proton donor in catalysis.

This sequence belongs to the glycosyl hydrolase 16 family.

It carries out the reaction Hydrolysis of (1-&gt;4)-beta-D-glucosidic linkages in beta-D-glucans containing (1-&gt;3)- and (1-&gt;4)-bonds.. Hydrolyzes B-glucans containing mixed beta-1,3 and beta-1,4 linkages. The protein is Beta-glucanase (bglBB) of Brevibacillus brevis (Bacillus brevis).